A 444-amino-acid polypeptide reads, in one-letter code: Methylenetetrahydrofolate--tRNA-(uracil-5-)-methyltransferase TrmFO (444 aa).

An FAD-binding site is contributed by 10–15 (GAGLAG).

The protein belongs to the MnmG family. TrmFO subfamily. It depends on FAD as a cofactor.

The protein resides in the cytoplasm. The catalysed reaction is uridine(54) in tRNA + (6R)-5,10-methylene-5,6,7,8-tetrahydrofolate + NADH + H(+) = 5-methyluridine(54) in tRNA + (6S)-5,6,7,8-tetrahydrofolate + NAD(+). It catalyses the reaction uridine(54) in tRNA + (6R)-5,10-methylene-5,6,7,8-tetrahydrofolate + NADPH + H(+) = 5-methyluridine(54) in tRNA + (6S)-5,6,7,8-tetrahydrofolate + NADP(+). Catalyzes the folate-dependent formation of 5-methyl-uridine at position 54 (M-5-U54) in all tRNAs. The protein is Methylenetetrahydrofolate--tRNA-(uracil-5-)-methyltransferase TrmFO of Streptococcus pneumoniae serotype 4 (strain ATCC BAA-334 / TIGR4).